Reading from the N-terminus, the 110-residue chain is Iron-sulfur cluster assembly protein CyaY (110 aa).

The protein belongs to the frataxin family.

Its function is as follows. Involved in iron-sulfur (Fe-S) cluster assembly. May act as a regulator of Fe-S biogenesis. The polypeptide is Iron-sulfur cluster assembly protein CyaY (Pseudomonas syringae pv. syringae (strain B728a)).